Here is a 379-residue protein sequence, read N- to C-terminus: Alcohol dehydrogenase 2 (379 aa).

Zn(2+) is bound by residues cysteine 47, threonine 49, histidine 69, cysteine 99, cysteine 102, cysteine 105, cysteine 113, and cysteine 177. An alcohol contacts are provided by threonine 49 and histidine 69. Threonine 49 provides a ligand contact to NAD(+). NAD(+)-binding positions include 202–207, aspartate 226, lysine 231, threonine 272, valine 295, 295–297, phenylalanine 322, and arginine 372; these read GLGAVG and VGV.

The protein belongs to the zinc-containing alcohol dehydrogenase family. In terms of assembly, homodimer. Zn(2+) serves as cofactor.

The protein resides in the cytoplasm. It catalyses the reaction a primary alcohol + NAD(+) = an aldehyde + NADH + H(+). The catalysed reaction is a secondary alcohol + NAD(+) = a ketone + NADH + H(+). This is Alcohol dehydrogenase 2 (ADH2) from Zea mays (Maize).